The following is a 380-amino-acid chain: uncharacterized protein (380 aa).

The disordered stretch occupies residues 251-275 (NMSERPPTPSHDTASSSTSTDPNPL). Low complexity predominate over residues 260–272 (SHDTASSSTSTDP).

This is an uncharacterized protein from Allium cepa var. aggregatum (Shallot).